The following is a 325-amino-acid chain: HTH-type transcriptional regulator BbuR (325 aa).

The HTH lysR-type domain maps to 15–72 (LDTDLLNVFCWVAKTQSFSRAAAELGTSQPVITRKIGRLEECLGVALFVRSNRGCVLT). The H-T-H motif DNA-binding region spans 32–51 (FSRAAAELGTSQPVITRKIG).

This sequence belongs to the LysR transcriptional regulatory family.

The polypeptide is HTH-type transcriptional regulator BbuR (bbuR) (Bordetella bronchiseptica (strain ATCC BAA-588 / NCTC 13252 / RB50) (Alcaligenes bronchisepticus)).